Consider the following 376-residue polypeptide: Germination-specific cysteine protease 1 (376 aa).

An N-terminal signal peptide occupies residues 1–22 (MAPSTKVLSLLLLYVVVSLASG). The propeptide at 23–144 (DESIINDHLQ…KYSAAVNGKE (122 aa)) is activation peptide. Asn93 carries an N-linked (GlcNAc...) asparagine glycan. 3 disulfide bridges follow: Cys166–Cys208, Cys200–Cys241, and Cys299–Cys351. The active site involves Cys169. Residues His305 and Asn325 contribute to the active site.

Belongs to the peptidase C1 family.

Functionally, probable thiol protease. This chain is Germination-specific cysteine protease 1, found in Arabidopsis thaliana (Mouse-ear cress).